A 217-amino-acid chain; its full sequence is Replication-associated protein A (217 aa).

Positions methionine 1–asparagine 17 are enriched in low complexity. A disordered region spans residues methionine 1–arginine 22. Residues arginine 22–leucine 125 enclose the CRESS-DNA virus Rep endonuclease domain. Residues phenylalanine 29–tyrosine 32 carry the RCR-1 motif. Residues glutamate 63, histidine 71, and histidine 73 each coordinate a divalent metal cation. Residues histidine 71–histidine 73 carry the RCR-2 motif. The For DNA cleavage activity role is filled by tyrosine 111. Residues tyrosine 111–lysine 114 carry the RCR-3 motif. Residues serine 176–tyrosine 188 form an oligomerization region.

This sequence belongs to the geminiviridae Rep protein family. As to quaternary structure, homooligomer. Part of the C- and V-complexes which are RepA-Rep-DNA complexes involved in the c-sense and v-sense transcription.

It localises to the host nucleus. It is found in the host cytoplasm. Functionally, implicated in enhancement of V-sense gene expression. Acts a an inhibitor of C-sense gene transcription. The sequence is that of Replication-associated protein A from Miscanthus sacchariflorus (MiSV).